A 453-amino-acid polypeptide reads, in one-letter code: NADH-quinone oxidoreductase subunit D (453 aa).

Residues 1–21 (MKDTETRPGRHRAPEPAHPEQ) show a composition bias toward basic and acidic residues. The disordered stretch occupies residues 1–30 (MKDTETRPGRHRAPEPAHPEQPDTTGDTVV).

This sequence belongs to the complex I 49 kDa subunit family. NDH-1 is composed of 14 different subunits. Subunits NuoB, C, D, E, F, and G constitute the peripheral sector of the complex.

It localises to the cell membrane. It catalyses the reaction a quinone + NADH + 5 H(+)(in) = a quinol + NAD(+) + 4 H(+)(out). In terms of biological role, NDH-1 shuttles electrons from NADH, via FMN and iron-sulfur (Fe-S) centers, to quinones in the respiratory chain. The immediate electron acceptor for the enzyme in this species is believed to be a menaquinone. Couples the redox reaction to proton translocation (for every two electrons transferred, four hydrogen ions are translocated across the cytoplasmic membrane), and thus conserves the redox energy in a proton gradient. In Nocardia farcinica (strain IFM 10152), this protein is NADH-quinone oxidoreductase subunit D.